Consider the following 333-residue polypeptide: DNA-directed RNA polymerase subunit alpha (333 aa).

The alpha N-terminal domain (alpha-NTD) stretch occupies residues 1-235 (MQTNLLKPKA…EQLAVFAQLE (235 aa)). Residues 253–333 (FDPILLRPVD…NWPPQGLDKR (81 aa)) form an alpha C-terminal domain (alpha-CTD) region.

This sequence belongs to the RNA polymerase alpha chain family. As to quaternary structure, homodimer. The RNAP catalytic core consists of 2 alpha, 1 beta, 1 beta' and 1 omega subunit. When a sigma factor is associated with the core the holoenzyme is formed, which can initiate transcription.

It carries out the reaction RNA(n) + a ribonucleoside 5'-triphosphate = RNA(n+1) + diphosphate. Functionally, DNA-dependent RNA polymerase catalyzes the transcription of DNA into RNA using the four ribonucleoside triphosphates as substrates. In Methylibium petroleiphilum (strain ATCC BAA-1232 / LMG 22953 / PM1), this protein is DNA-directed RNA polymerase subunit alpha.